Consider the following 606-residue polypeptide: Homeobox protein B-H1 (606 aa).

Residues 1–14 (MKDSMSILTQTPSE) show a composition bias toward polar residues. Disordered regions lie at residues 1–65 (MKDS…PAVA), 104–188 (YKQQ…HPHA), 261–340 (APAG…AFTD), and 508–606 (AAAN…QIQV). Residues 21 to 40 (QLHHHLSHHHHPALHHHPVL) show a composition bias toward basic residues. Low complexity predominate over residues 41–65 (QHHYSLQQQHQQQQQQQPPAPPAVA). Residues 108–118 (QQHHHHHHQSH) show a composition bias toward basic residues. The span at 119-138 (HNNNNHSGGSSGGTSPTHHN) shows a compositional bias: low complexity. The segment covering 166 to 188 (HHLHPQSHPHPHPHPHSHPHPHA) has biased composition (basic residues). The segment covering 266-284 (ELDDSSDYHEENEDCDSDE) has biased composition (acidic residues). Over residues 286-295 (GSAGGGGGGS) the composition is skewed to gly residues. The segment covering 297 to 314 (HMDDHSVCSNGGKDDDGN) has biased composition (basic and acidic residues). Residues 315 to 325 (SIKSGSTSDMS) show a composition bias toward polar residues. A DNA-binding region (homeobox) is located at residues 331 to 390 (QRKARTAFTDHQLQTLEKSFERQKYLSVQERQELAHKLDLSDCQVKTWYQNRRTKWMRQT). The span at 513-522 (GGPPPPPPPS) shows a compositional bias: pro residues. Residues 523-534 (SAAAATGGSPSP) show a composition bias toward low complexity. Residues 561–576 (ASPPLPLPLARPPSTP) are compositionally biased toward pro residues.

The protein belongs to the Antp homeobox family. As to expression, abundant in the eye-antenna imaginal disk.

The protein localises to the nucleus. Functionally, functionally required in R1 and R6 receptor cells and primary pigment cells for normal eye development. The chain is Homeobox protein B-H1 (B-H1) from Drosophila ananassae (Fruit fly).